Reading from the N-terminus, the 131-residue chain is Small ribosomal subunit protein uS8 (131 aa).

It belongs to the universal ribosomal protein uS8 family. As to quaternary structure, part of the 30S ribosomal subunit. Contacts proteins S5 and S12.

Its function is as follows. One of the primary rRNA binding proteins, it binds directly to 16S rRNA central domain where it helps coordinate assembly of the platform of the 30S subunit. The polypeptide is Small ribosomal subunit protein uS8 (Aromatoleum aromaticum (strain DSM 19018 / LMG 30748 / EbN1) (Azoarcus sp. (strain EbN1))).